The sequence spans 300 residues: Auxin-responsive protein IAA7 (300 aa).

2 disordered regions span residues 1-80 and 92-125; these read MGEA…DGDK and VSHS…LASN. An EAR-like (transcriptional repression) motif is present at residues 43 to 47; sequence LSLGL. A compositionally biased stretch (polar residues) spans 92–103; that stretch reads VSHSQGKANKNK. A PB1 domain is found at 177-281; it reads APFIKINMDG…SVKRLRVLKT (105 aa).

This sequence belongs to the Aux/IAA family. Homodimers and heterodimers. In terms of tissue distribution, expressed at low levels in roots and shoots.

It localises to the nucleus. Its function is as follows. Aux/IAA proteins are short-lived transcriptional factors that function as repressors of early auxin response genes at low auxin concentrations. The chain is Auxin-responsive protein IAA7 (IAA7) from Oryza sativa subsp. japonica (Rice).